We begin with the raw amino-acid sequence, 1824 residues long: Afadin (1824 aa).

The Ras-associating 1 domain maps to 39–133; sequence FHGVMRFYFQ…GRFVLKNEND (95 aa). Residues 128-194 form a disordered region; sequence LKNENDAIPP…DRPFQGEDVE (67 aa). A coiled-coil region spans residues 146–185; the sequence is EKQEKEGVIQNFKRTLSKKEKKEKKKREKEALRQASDKDD. Residues 160–172 are compositionally biased toward basic residues; that stretch reads TLSKKEKKEKKKR. The span at 173 to 189 shows a compositional bias: basic and acidic residues; the sequence is EKEALRQASDKDDRPFQ. Phosphoserine occurs at positions 216, 246, and 256. The region spanning 246 to 348 is the Ras-associating 2 domain; sequence SGGTLRIYAD…LVFQLKRRPP (103 aa). Positions 349–371 are enriched in basic and acidic residues; that stretch reads DHIPKKTKKHLEGKTPKGKERAD. The disordered stretch occupies residues 349–378; it reads DHIPKKTKKHLEGKTPKGKERADGSGYGST. S391 and S424 each carry phosphoserine. In terms of domain architecture, FHA spans 426–492; it reads TEVGTEKLDD…LQSGMKVQFG (67 aa). Phosphoserine is present on residues S512, S557, S562, S589, and S655. The disordered stretch occupies residues 534–595; it reads FDLGGDIHSG…RQESRTQDAS (62 aa). Over residues 580 to 591 the composition is skewed to basic and acidic residues; the sequence is QQPDYRRQESRT. Positions 668–908 constitute a Dilute domain; sequence NKMVSMMEGV…IENVVTVAEN (241 aa). The region spanning 1007 to 1093 is the PDZ domain; the sequence is IITVTLKKQN…VVTLEVAKQG (87 aa). 9 positions are modified to phosphoserine: S1083, S1107, S1126, S1140, S1143, S1172, S1173, S1182, and S1199. The disordered stretch occupies residues 1107 to 1223; sequence SPMMQRISDR…PRPEAYPIPT (117 aa). Over residues 1113 to 1128 the composition is skewed to basic and acidic residues; it reads ISDRRGSGKPRPKSEG. Polar residues predominate over residues 1132–1143; the sequence is YNNSTQNGSPES. The segment covering 1152–1172 has biased composition (basic and acidic residues); the sequence is SEPKKLPGDDRLMKNRADHRS. Over residues 1190–1210 the composition is skewed to polar residues; the sequence is ASGTTAKITSVSTGNLCTEEQ. T1211 and T1232 each carry phosphothreonine. Disordered stretches follow at residues 1235-1473, 1501-1528, and 1569-1824; these read ASKS…LQRP, SKEE…EKQQ, and RLQE…LNTK. Residue S1238 is modified to Phosphoserine. 2 stretches are compositionally biased toward basic and acidic residues: residues 1252-1262 and 1274-1302; these read YEEKPHMHTDS and RSQE…KSDS. Phosphoserine is present on S1275. Residues 1309 to 1318 show a composition bias toward low complexity; the sequence is SSSLDSSTSS. Residues 1325–1337 are compositionally biased toward polar residues; the sequence is SSKSVTPASTLTK. S1328 carries the post-translational modification Phosphoserine. T1330 carries the phosphothreonine modification. Residues 1345-1356 are compositionally biased toward low complexity; it reads TPAAIPATPVAV. Pro residues predominate over residues 1364-1373; the sequence is LPPPPPPPPV. Positions 1407 to 1441 are enriched in basic and acidic residues; it reads AERRKREEHQRWYEKEKARLEEERERKRREQERKL. Residues 1408 to 1448 adopt a coiled-coil conformation; it reads ERRKREEHQRWYEKEKARLEEERERKRREQERKLGQMRTQS. 2 positions are modified to phosphoserine: S1501 and S1512. The segment covering 1515–1528 has biased composition (basic and acidic residues); the sequence is PWKRDAKEKLEKQQ. Positions 1523-1667 form a coiled coil; the sequence is KLEKQQQMHI…SRLEAERRRQ (145 aa). Residues 1578–1589 are compositionally biased toward acidic residues; the sequence is EDDEEEEDDDVD. The segment covering 1597-1677 has biased composition (basic and acidic residues); it reads LEAERRARLQ…HDEAARRLLE (81 aa). Residues 1694–1709 show a composition bias toward pro residues; sequence PPSPSPAPGAPPPPPQ. Residues S1696, S1721, S1774, S1779, and S1799 each carry the phosphoserine modification. Positions 1762 to 1776 are enriched in basic and acidic residues; that stretch reads DACRDAKEKRSKSQD. K1807 carries the post-translational modification N6-acetyllysine. Residues 1813 to 1824 show a composition bias toward basic and acidic residues; sequence KLTELENELNTK.

In terms of assembly, homodimer. Interacts with F-actin, nectin and NECTIN3. Essential for the association of nectin and E-cadherin. Isoform 1/s-afadin does not interact with F-actin. Interacts with ZO-1 and occludin, but probably in an indirect manner. Interacts with RIT1 and RIT2. Interacts with NRXN1 and BCR. Interacts with ADAM10; the interaction locks ADAM10 at adherens junctions following ADAM10 recruitment to adherens junctions by TSPAN33.

The protein localises to the cell junction. Its subcellular location is the adherens junction. Functionally, belongs to an adhesion system, probably together with the E-cadherin-catenin system, which plays a role in the organization of homotypic, interneuronal and heterotypic cell-cell adherens junctions (AJs). Nectin- and actin-filament-binding protein that connects nectin to the actin cytoskeleton. May play a key role in the organization of epithelial structures of the embryonic ectoderm. Essential for the organization of adherens junctions. In Homo sapiens (Human), this protein is Afadin.